We begin with the raw amino-acid sequence, 191 residues long: Glutathione-dependent formaldehyde-activating enzyme (191 aa).

The CENP-V/GFA domain maps to 22–169; it reads FAGGTLQCLC…LTELGLTPYD (148 aa). Residues Cys29, Cys31, Cys50, Cys52, Cys55, Cys97, and Cys100 each coordinate Zn(2+).

Belongs to the Gfa family. Requires Zn(2+) as cofactor.

The catalysed reaction is S-(hydroxymethyl)glutathione = glutathione + formaldehyde. It participates in one-carbon metabolism; formaldehyde degradation; formate from formaldehyde (glutathione route): step 1/3. In terms of biological role, catalyzes the condensation of formaldehyde and glutathione to S-hydroxymethylglutathione. The sequence is that of Glutathione-dependent formaldehyde-activating enzyme from Xanthomonas campestris pv. campestris (strain 8004).